The chain runs to 136 residues: DNA-directed RNA polymerase subunit omega (136 aa).

The interval 79–107 is disordered; the sequence is EPEAETVPLLSSSPAAAAVAPQSSSDDAA. Positions 89–107 are enriched in low complexity; that stretch reads SSSPAAAAVAPQSSSDDAA.

The protein belongs to the RNA polymerase subunit omega family. In terms of assembly, the RNAP catalytic core consists of 2 alpha, 1 beta, 1 beta' and 1 omega subunit. When a sigma factor is associated with the core the holoenzyme is formed, which can initiate transcription.

The catalysed reaction is RNA(n) + a ribonucleoside 5'-triphosphate = RNA(n+1) + diphosphate. Functionally, promotes RNA polymerase assembly. Latches the N- and C-terminal regions of the beta' subunit thereby facilitating its interaction with the beta and alpha subunits. The polypeptide is DNA-directed RNA polymerase subunit omega (Methylobacterium radiotolerans (strain ATCC 27329 / DSM 1819 / JCM 2831 / NBRC 15690 / NCIMB 10815 / 0-1)).